Here is a 520-residue protein sequence, read N- to C-terminus: TnpB-like protein L770 (520 aa).

The segment at 23 to 44 is disordered; it reads KTKKKVFVKKKPPDKKPLKKPV. Positions 474, 477, 491, and 494 each coordinate Zn(2+).

It in the central section; belongs to the transposase 2 family. In the C-terminal section; belongs to the transposase 35 family.

In Acanthamoeba polyphaga mimivirus (APMV), this protein is TnpB-like protein L770.